We begin with the raw amino-acid sequence, 123 residues long: Holo-[acyl-carrier-protein] synthase (123 aa).

Asp8 and Glu60 together coordinate Mg(2+).

The protein belongs to the P-Pant transferase superfamily. AcpS family. Requires Mg(2+) as cofactor.

It localises to the cytoplasm. It catalyses the reaction apo-[ACP] + CoA = holo-[ACP] + adenosine 3',5'-bisphosphate + H(+). Functionally, transfers the 4'-phosphopantetheine moiety from coenzyme A to a Ser of acyl-carrier-protein. In Ehrlichia ruminantium (strain Gardel), this protein is Holo-[acyl-carrier-protein] synthase.